A 665-amino-acid polypeptide reads, in one-letter code: DNA mismatch repair protein MutL (665 aa).

The protein belongs to the DNA mismatch repair MutL/HexB family.

Functionally, this protein is involved in the repair of mismatches in DNA. It is required for dam-dependent methyl-directed DNA mismatch repair. May act as a 'molecular matchmaker', a protein that promotes the formation of a stable complex between two or more DNA-binding proteins in an ATP-dependent manner without itself being part of a final effector complex. The protein is DNA mismatch repair protein MutL of Acidobacterium capsulatum (strain ATCC 51196 / DSM 11244 / BCRC 80197 / JCM 7670 / NBRC 15755 / NCIMB 13165 / 161).